A 172-amino-acid polypeptide reads, in one-letter code: Large ribosomal subunit protein uL10 (172 aa).

The protein belongs to the universal ribosomal protein uL10 family. In terms of assembly, part of the ribosomal stalk of the 50S ribosomal subunit. The N-terminus interacts with L11 and the large rRNA to form the base of the stalk. The C-terminus forms an elongated spine to which L12 dimers bind in a sequential fashion forming a multimeric L10(L12)X complex.

Functionally, forms part of the ribosomal stalk, playing a central role in the interaction of the ribosome with GTP-bound translation factors. This Parvibaculum lavamentivorans (strain DS-1 / DSM 13023 / NCIMB 13966) protein is Large ribosomal subunit protein uL10.